A 141-amino-acid chain; its full sequence is VLSANDKSNVKAAWGKVGNHAPEYGAEALERMFLSFPTTKTYFPHFDLSHGSSQVKAHGKKVADALTKAVGHLDDLPGALSDLSDLHAHKLRVDPVNFKLLSHCLLVTLAAHHPSDFTPAAHASLDKFLANVSTVLTSKYR.

In terms of domain architecture, Globin spans 1–141 (VLSANDKSNV…VSTVLTSKYR (141 aa)). A Phosphoserine modification is found at serine 3. Residues lysine 7 and lysine 11 each carry the N6-succinyllysine modification. An N6-acetyllysine; alternate modification is found at lysine 16. An N6-succinyllysine; alternate modification is found at lysine 16. Residue tyrosine 24 is modified to Phosphotyrosine. Serine 35 carries the phosphoserine modification. N6-succinyllysine is present on lysine 40. Serine 49 carries the post-translational modification Phosphoserine. O2 is bound at residue histidine 58. Histidine 87 serves as a coordination point for heme b. Phosphoserine is present on serine 102. Position 108 is a phosphothreonine (threonine 108). Position 124 is a phosphoserine (serine 124). Threonine 134 and threonine 137 each carry phosphothreonine. Residue serine 138 is modified to Phosphoserine.

The protein belongs to the globin family. In terms of assembly, heterotetramer of two alpha chains and two beta chains. Red blood cells.

Its function is as follows. Involved in oxygen transport from the lung to the various peripheral tissues. Hemopressin acts as an antagonist peptide of the cannabinoid receptor CNR1. Hemopressin-binding efficiently blocks cannabinoid receptor CNR1 and subsequent signaling. The sequence is that of Hemoglobin subunit alpha (HBA) from Hippopotamus amphibius (Hippopotamus).